The following is a 521-amino-acid chain: Ribonuclease Y (521 aa).

Residues 5 to 25 (MMTMILAVIAAAIGFLIGNLL) form a helical membrane-spanning segment. A KH domain is found at 211-271 (TVSVVALPSD…VRREVAKLSL (61 aa)). An HD domain is found at 337–430 (VYQHSLEVAF…VQAADALSGA (94 aa)).

Belongs to the RNase Y family.

The protein resides in the cell membrane. Its function is as follows. Endoribonuclease that initiates mRNA decay. This is Ribonuclease Y from Geotalea uraniireducens (strain Rf4) (Geobacter uraniireducens).